The following is a 291-amino-acid chain: uncharacterized protein (291 aa).

In terms of domain architecture, DAGKc spans P68 to G205.

This is an uncharacterized protein from Mycobacterium tuberculosis (strain CDC 1551 / Oshkosh).